Here is a 713-residue protein sequence, read N- to C-terminus: Serologically defined colon cancer antigen 8 (713 aa).

Serine 4 and serine 28 each carry phosphoserine. A disordered region spans residues 84-103 (QADKESEVSPSRRRKMSPLR). The stretch at 129 to 175 (IHHLEAEVKFCKEELSGMKNKIQVVVLENEGLQQQLKSQRQEETLRE) forms a coiled coil. Positions 194 to 215 (EDSGVGETSKRPFSHDNADFGK) are disordered. A compositionally biased stretch (basic and acidic residues) spans 201–212 (TSKRPFSHDNAD). A sufficient for homodimerization region spans residues 216 to 713 (AASAGEQLEL…QLPSMPQSDC (498 aa)). Coiled coils occupy residues 223–273 (LELE…LLAA) and 348–707 (EEAN…QLPS). A mediates interaction with OFD1 region spans residues 533-713 (HQLHLTRQEK…QLPSMPQSDC (181 aa)).

Homodimer. Interacts with OFD1; the interaction is direct. Interacts with FAM161A. Interacts with RABEP2, ERC1 and CEP131. As to expression, expressed in thymus, prostate, testis, ovary, small intestine, colon, mucosa, colon and renal cancer tumors.

Its subcellular location is the cytoplasm. The protein resides in the cytoskeleton. It localises to the microtubule organizing center. It is found in the centrosome. The protein localises to the centriole. Its subcellular location is the cilium basal body. The protein resides in the cell junction. In terms of biological role, plays a role in the establishment of cell polarity and epithelial lumen formation. Also plays an essential role in ciliogenesis and subsequent Hedgehog signaling pathway that requires the presence of intact primary cilia for pathway activation. Mechanistically, interacts with and mediates RABEP2 centrosomal localization which is critical for ciliogenesis. This is Serologically defined colon cancer antigen 8 (SDCCAG8) from Homo sapiens (Human).